Here is a 226-residue protein sequence, read N- to C-terminus: MNSFPNIAIDGPAGAGKSTVARLLSKELGFLYIDTGAMYRAVALKAIRKGVDLADQPGLSRLAAVTSVNLKTDAEGNLRVFLDGEDVTEEIRSPAVSKAVSLVARVPAVRERLVELQRAMASGGGVVMEGRDIGTVVLPDAEIKIFLTASPEERARRRREELAARGYIVDQHQMVNEITERDRIDTTRAAGPLVPAADAEIIDCSSMPVEKVVKMIVARVSAGRRE.

11–19 contributes to the ATP binding site; the sequence is GPAGAGKST.

The protein belongs to the cytidylate kinase family. Type 1 subfamily.

The protein resides in the cytoplasm. It carries out the reaction CMP + ATP = CDP + ADP. The enzyme catalyses dCMP + ATP = dCDP + ADP. The polypeptide is Cytidylate kinase (Pelotomaculum thermopropionicum (strain DSM 13744 / JCM 10971 / SI)).